We begin with the raw amino-acid sequence, 309 residues long: Cytochrome c biogenesis protein CcsA (309 aa).

Helical transmembrane passes span 18–38 (LGIL…GAVF), 43–63 (FFIV…QLLF), 67–87 (ISGH…AWGI), 102–122 (IIPS…CFVL), 148–168 (VMLS…VLFI), 216–236 (SILI…VWAN), 250–267 (TWAF…HMRI), and 279–299 (LATS…FLGI).

This sequence belongs to the CcmF/CycK/Ccl1/NrfE/CcsA family. May interact with ccs1.

Its subcellular location is the cellular thylakoid membrane. In terms of biological role, required during biogenesis of c-type cytochromes (cytochrome c6 and cytochrome f) at the step of heme attachment. The polypeptide is Cytochrome c biogenesis protein CcsA (Prochlorococcus marinus (strain MIT 9312)).